A 1058-amino-acid polypeptide reads, in one-letter code: Lon protease homolog, mitochondrial (1058 aa).

A mitochondrion-targeting transit peptide spans 1 to 47 (MLTRIRNAGVGGNAARRVRLLAGYTGARMAHAAALNSTTGAGGAARA). Positions 72–151 (GGQCILKQDR…RSNPPSEGEV (80 aa)) are disordered. 2 stretches are compositionally biased toward basic and acidic residues: residues 78-97 (KQDR…RAEE) and 106-118 (DEEA…EEQA). A compositionally biased stretch (gly residues) spans 129-142 (GSGGSASSAGGGGR). Residues 158 to 412 (LMVLPMSNRP…KALVFIKKEV (255 aa)) form the Lon N-terminal domain. An ATP-binding site is contributed by 564-571 (GPPGVGKT). The segment at 778 to 814 (TPKSAPAETNIEPENGKPDASAKPLTNNLPAPEPLNI) is disordered. The Lon proteolytic domain maps to 844–1030 (KTPAGVVMGL…DDVFNVLFGS (187 aa)). Catalysis depends on residues Ser-936 and Lys-979.

The protein belongs to the peptidase S16 family. Homohexamer or homoheptamer. Organized in a ring with a central cavity.

The protein resides in the mitochondrion matrix. The catalysed reaction is Hydrolysis of proteins in presence of ATP.. In terms of biological role, ATP-dependent serine protease that mediates the selective degradation of misfolded, unassembled or oxidatively damaged polypeptides as well as certain short-lived regulatory proteins in the mitochondrial matrix. May also have a chaperone function in the assembly of inner membrane protein complexes. Participates in the regulation of mitochondrial gene expression and in the maintenance of the integrity of the mitochondrial genome. Binds to mitochondrial DNA in a site-specific manner. In Eremothecium gossypii (strain ATCC 10895 / CBS 109.51 / FGSC 9923 / NRRL Y-1056) (Yeast), this protein is Lon protease homolog, mitochondrial.